Consider the following 148-residue polypeptide: Antigen GM6 (148 aa).

The tract at residues Lys1 to Glu22 is disordered. 2 tandem repeats follow at residues Lys1 to Ala68 and Lys69 to Ala136. One copy of the 3; truncated repeat lies at Lys137–Ser148.

It localises to the cytoplasm. The protein localises to the cytoskeleton. In Trypanosoma brucei gambiense, this protein is Antigen GM6 (GM6).